Here is a 1104-residue protein sequence, read N- to C-terminus: Extended synaptotagmin-1 (1104 aa).

Met-1 is modified (N-acetylmethionine). Residues 1 to 38 are Cytoplasmic-facing; sequence MERSPGEGPSPSPMDQPSAPSDPTDQPPAAHAKPDPGS. The segment at 1 to 48 is disordered; sequence MERSPGEGPSPSPMDQPSAPSDPTDQPPAAHAKPDPGSGGQPAGPGAA. Residues 37-47 show a composition bias toward gly residues; sequence GSGGQPAGPGA. The chain crosses the membrane as a helical span at residues 39 to 59; it reads GGQPAGPGAAGEALAVLTSFG. At 60–62 the chain is on the lumenal side; the sequence is RRL. Residues 63 to 83 form a helical membrane-spanning segment; it reads LVLIPVYLAGAVGLSVGFVLF. The Cytoplasmic portion of the chain corresponds to 84–1104; the sequence is GLALYLGWRR…LMDNKDKGSS (1021 aa). Positions 91 to 116 form a coiled coil; it reads WRRVRDEKERSLRAARQLLDDEEQLT. Residues 135-313 form the SMP-LTD domain; sequence DVEKAEWLNK…LPNRLLVPLV (179 aa). 4 consecutive C2 domains span residues 312-433, 460-580, 627-751, and 777-899; these read LVPD…DDWF, QVLQ…QLSS, SVDA…DEWL, and LEEV…TLSS. Phosphoserine; by CDK5 is present on Ser-324. Positions 344, 345, 357, 404, 406, 408, 410, and 411 each coordinate Ca(2+). The segment at 617 to 641 is disordered; it reads VDSENPQRGSSVDAPPRPCHTTPDS. Lys-817 carries the post-translational modification N6-acetyllysine. Residues Ser-820 and Ser-941 each carry the phosphoserine modification. The interval 924–950 is disordered; sequence SHSYSHSSSSLSEEPELSGGPPHITSS. Over residues 925-946 the composition is skewed to low complexity; sequence HSYSHSSSSLSEEPELSGGPPH. Thr-948 is subject to Phosphothreonine. A phosphoserine mark is found at Ser-949 and Ser-963. In terms of domain architecture, C2 5 spans 971–1093; that stretch reads PLGQVKLTLW…DLSQGVARWY (123 aa). Residue Tyr-1009 is modified to Phosphotyrosine. The interval 1018–1025 is required for phosphatidylinositol 4,5-bisphosphate-dependent location at the cell membrane; sequence KNRGTKRR. Ser-1034 bears the Phosphoserine mark.

This sequence belongs to the extended synaptotagmin family. As to quaternary structure, interacts with ESYT2 and ESYT3. Interacts with ADGRD1; inhibiting the G-protein-coupled receptor activity of ADGRD1. Interaction with ADGRD1 is abolished when cytosolic calcium increases, relieving ADGRD1 G-protein-coupled receptor activity. Interacts (phosphorylated form) with SLC2A4. In terms of processing, phosphorylated on Ser residues in insulin-treated adipocytes (in vitro); this promotes interaction with SLC2A4. As to expression, widely expressed.

Its subcellular location is the endoplasmic reticulum membrane. It localises to the cell membrane. Binds calcium (via the C2 domains) and translocates to sites of contact between the endoplasmic reticulum and the cell membrane in response to increased cytosolic calcium levels. Helps tether the endoplasmic reticulum to the cell membrane and promotes the formation of appositions between the endoplasmic reticulum and the cell membrane. Acts as an inhibitor of ADGRD1 G-protein-coupled receptor activity in absence of cytosolic calcium. Binds glycerophospholipids in a barrel-like domain and may play a role in cellular lipid transport. The chain is Extended synaptotagmin-1 from Homo sapiens (Human).